A 916-amino-acid chain; its full sequence is Neurofilament medium polypeptide (916 aa).

Polar residues predominate over residues 1–10 (MSYTLDSLGN). Positions 1-51 (MSYTLDSLGNPSAYRRVTETRSSFSRVSGSPSSGFRSQSWSRGSPSTVSSS) are disordered. An N-acetylserine modification is found at serine 2. Residues 2-104 (SYTLDSLGNP…KLSRSNEKEQ (103 aa)) form a head region. Residues 21-44 (RSSFSRVSGSPSSGFRSQSWSRGS) are compositionally biased toward low complexity. Serine 30 bears the Phosphoserine mark. Arginine 42 is modified (omega-N-methylarginine). O-linked (GlcNAc) threonine glycosylation is present at threonine 47. The residue at position 99 (serine 99) is a Phosphoserine. The region spanning 101 to 412 (EKEQLQGLND…KLLEGEETRF (312 aa)) is the IF rod domain. Residues 105–136 (LQGLNDRFAGYIEKVHYLEQQNKEIEAEIQAL) form a coil 1A region. Residues 137–149 (RQKQASHAQLGDA) are linker 1. The tract at residues 150–248 (YDQEIRELRA…EEEVADLLAQ (99 aa)) is coil 1B. Serine 226 is subject to Phosphoserine. Residues 249–265 (IQASHITVERKDYLKTD) are linker 12. Positions 266–287 (ISTALKEIRSQLESHSDQNMHQ) are coil 2A. The tract at residues 288–291 (AEEW) is linker 2. The tract at residues 292-412 (FKCRYAKLTE…KLLEGEETRF (121 aa)) is coil 2B. Tyrosine 320 is subject to Phosphotyrosine. Residues serine 346 and serine 418 each carry the phosphoserine modification. The tail stretch occupies residues 413-916 (STFAGSITGP…AIVKEVTQSD (504 aa)). Residue threonine 431 is glycosylated (O-linked (GlcNAc) threonine). A phosphoserine mark is found at serine 467 and serine 483. The disordered stretch occupies residues 485–851 (KEEKKEAAEE…KKGGDKSEEK (367 aa)). A compositionally biased stretch (acidic residues) spans 493–505 (EEKEEEPEAEEEE). Serine 511 carries the phosphoserine modification. Acidic residues predominate over residues 521 to 541 (KEEEGEKEEEEGQEEEEEEDE). A compositionally biased stretch (basic and acidic residues) spans 542 to 561 (GAKSDQAEEGGSEKEGSSEK). 4 positions are modified to phosphoserine: serine 545, serine 553, serine 558, and serine 559. Positions 562-582 (EEGEQEEGETEAEAEGEEAEA) are enriched in acidic residues. The residue at position 571 (threonine 571) is a Phosphothreonine. Basic and acidic residues predominate over residues 583–614 (KEEKKVEEKSEEVATKEELVADAKVEKPEKAK). Tandem repeats lie at residues 614–626 (KSPVPKSPVEEKG), 627–639 (KSPVPKSPVEEKG), 640–652 (KSPVPKSPVEEKG), 653–665 (KSPVPKSPVEEKG), 666–678 (KSPVSKSPVEEKA), and 679–691 (KSPVPKSPVEEAK). Residues 614–691 (KSPVPKSPVE…VPKSPVEEAK (78 aa)) form a 6 X 13 AA approximate tandem repeats of K-S-P-V-[PS]-K-S-P-V-E-E-[KA]-[GAK] region. Serine 641 and serine 646 each carry phosphoserine. Residues serine 680 and serine 685 each carry the phosphoserine modification. Basic and acidic residues-rich tracts occupy residues 686 to 701 (PVEEAKSKAEVGKGEQ), 707 to 742 (KEVKEAPKEEKVEKKEEKPKDVPEKKKAESPVKEEA), and 755 to 778 (VHLEKETKEEGKPLQQEKEKEKAG). Position 736 is a phosphoserine (serine 736). Serine 783, serine 821, and serine 837 each carry phosphoserine. Residues 788-828 (SDKGAKGSRKEDIAVNGEVEGKEEVEQETKEKGSGREEEKG) show a composition bias toward basic and acidic residues. A compositionally biased stretch (basic and acidic residues) spans 839-851 (ADEKKGGDKSEEK).

Belongs to the intermediate filament family. As to quaternary structure, forms heterodimers with NEFL; which can further hetero-oligomerize (in vitro). Forms heterodimers with INA (in vitro). There are a number of repeats of the tripeptide K-S-P, NFM is phosphorylated on a number of the serines in this motif. It is thought that phosphorylation of NFM results in the formation of interfilament cross bridges that are important in the maintenance of axonal caliber. Post-translationally, phosphorylation seems to play a major role in the functioning of the larger neurofilament polypeptides (NF-M and NF-H), the levels of phosphorylation being altered developmentally and coincidentally with a change in the neurofilament function. In terms of processing, phosphorylated in the head and rod regions by the PKC kinase PKN1, leading to the inhibition of polymerization.

It is found in the cytoplasm. The protein resides in the cytoskeleton. Its subcellular location is the cell projection. It localises to the axon. In terms of biological role, neurofilaments usually contain three intermediate filament proteins: NEFL, NEFM, and NEFH which are involved in the maintenance of neuronal caliber. May additionally cooperate with the neuronal intermediate filament proteins PRPH and INA to form neuronal filamentous networks. The protein is Neurofilament medium polypeptide (NEFM) of Homo sapiens (Human).